Consider the following 269-residue polypeptide: 4-hydroxy-tetrahydrodipicolinate reductase (269 aa).

NAD(+) is bound by residues 10–15 (GANGRM), Glu-36, 99–101 (GTT), and 123–126 (AANF). The active-site Proton donor/acceptor is His-156. His-157 contributes to the (S)-2,3,4,5-tetrahydrodipicolinate binding site. Lys-160 (proton donor) is an active-site residue. 166 to 167 (GT) provides a ligand contact to (S)-2,3,4,5-tetrahydrodipicolinate.

It belongs to the DapB family.

It localises to the cytoplasm. The catalysed reaction is (S)-2,3,4,5-tetrahydrodipicolinate + NAD(+) + H2O = (2S,4S)-4-hydroxy-2,3,4,5-tetrahydrodipicolinate + NADH + H(+). The enzyme catalyses (S)-2,3,4,5-tetrahydrodipicolinate + NADP(+) + H2O = (2S,4S)-4-hydroxy-2,3,4,5-tetrahydrodipicolinate + NADPH + H(+). The protein operates within amino-acid biosynthesis; L-lysine biosynthesis via DAP pathway; (S)-tetrahydrodipicolinate from L-aspartate: step 4/4. Its function is as follows. Catalyzes the conversion of 4-hydroxy-tetrahydrodipicolinate (HTPA) to tetrahydrodipicolinate. This chain is 4-hydroxy-tetrahydrodipicolinate reductase, found in Neisseria meningitidis serogroup B (strain ATCC BAA-335 / MC58).